The chain runs to 105 residues: MKLHVAALATLAVVCILAAGSEAAPKAMSDPAVVKAQLFPDAFWESFKNVSMEFKKMVHGLQTSNIGEHAKSLYTDTVAVLTPYLQKIRENVTKMYQVYVESKQH.

The first 21 residues, 1-21, serve as a signal peptide directing secretion; the sequence is MKLHVAALATLAVVCILAAGS. The propeptide occupies 22–29; the sequence is EAAPKAMS.

Plasma.

The protein localises to the secreted. This chain is Blood plasma apolipoprotein LAL1, found in Petromyzon marinus (Sea lamprey).